A 227-amino-acid polypeptide reads, in one-letter code: Cleavage and polyadenylation specificity factor subunit 5 (227 aa).

Positions 76-201 constitute a Nudix hydrolase domain; the sequence is MRRTVEGVLI…KLVAAPLFEL (126 aa). The interaction with RNA stretch occupies residues 102–104; it reads TFF. The short motif at 109 to 130 is the Nudix box element; that stretch reads GELNPGEDEVEGLKRLMTEILG.

The protein belongs to the Nudix hydrolase family. CPSF5 subfamily. In terms of assembly, homodimer (via N- and C-terminus); binds RNA as homodimer. Component of the cleavage factor Im (CFIm) complex.

Its subcellular location is the nucleus. It localises to the cytoplasm. Its function is as follows. Component of the cleavage factor Im (CFIm) complex that functions as an activator of the pre-mRNA 3'-end cleavage and polyadenylation processing required for the maturation of pre-mRNA into functional mRNAs. CFIm contributes to the recruitment of multiprotein complexes on specific sequences on the pre-mRNA 3'-end, so called cleavage and polyadenylation signals (pA signals). Most pre-mRNAs contain multiple pA signals, resulting in alternative cleavage and polyadenylation (APA) producing mRNAs with variable 3'-end formation. The CFIm complex acts as a key regulator of cleavage and polyadenylation site choice during APA through its binding to 5'-UGUA-3' elements localized in the 3'-untranslated region (UTR) for a huge number of pre-mRNAs. Binds to 5'-UGUA-3' elements localized upstream of pA signals that act as enhancers of pre-mRNA 3'-end processing. The homodimer mediates simultaneous sequence-specific recognition of two 5'-UGUA-3' elements within the pre-mRNA. Plays a role in somatic cell fate transitions and pluripotency by regulating widespread changes in gene expression through an APA-dependent function. Binds to chromatin. Binds to, but does not hydrolyze mono- and di-adenosine nucleotides. This is Cleavage and polyadenylation specificity factor subunit 5 from Xenopus laevis (African clawed frog).